The chain runs to 790 residues: PGC-1 and ERR-induced regulator in muscle protein 1 (790 aa).

Disordered stretches follow at residues L38 to S391, V425 to V449, S507 to A545, and Q626 to P648. Residues S40–S52 show a composition bias toward low complexity. 2 stretches are compositionally biased toward polar residues: residues A80–Q89 and T98–A107. Residues A111–S123 show a composition bias toward low complexity. Over residues A146–P157 the composition is skewed to pro residues. The span at K158–P169 shows a compositional bias: low complexity. Residues P170–S179 show a composition bias toward pro residues. Residues K366–S391 are compositionally biased toward polar residues. A compositionally biased stretch (polar residues) spans K515–T532. Pro residues predominate over residues E635–P648.

Muscle-specific expression is increased by endurance exercise.

The protein resides in the cytoplasm. It localises to the nucleus. Regulates the expression of selective PPARGC1A/B and ESRRA/B/G target genes with roles in glucose and lipid metabolism, energy transfer, contractile function, muscle mitochondrial biogenesis and oxidative capacity. Required for the efficient induction of MT-CO2, MT-CO3, COX4I1, TFB1M, TFB2M, POLRMT and SIRT3 by PPARGC1A. Positively regulates the PPARGC1A/ESRRG-induced expression of CKMT2, TNNI3 and SLC2A4 and negatively regulates the PPARGC1A/ESRRG-induced expression of PDK4. The chain is PGC-1 and ERR-induced regulator in muscle protein 1 (PERM1) from Homo sapiens (Human).